Reading from the N-terminus, the 272-residue chain is Short-chain dehydrogenase srdC (272 aa).

Positions 15, 65, 127, 173, 177, 206, and 208 each coordinate NADP(+). The active-site Proton donor is the tyrosine 173. The active-site Lowers pKa of active site Tyr is lysine 177.

It belongs to the short-chain dehydrogenases/reductases (SDR) family.

In terms of biological role, short-chain dehydrogenase; part of the gene cluster that mediates the biosynthesis of sordarial, a salicylic aldehyde structurally related to the phytotoxin pyriculol. The most interesting aspect of this pathway is formation of an aromatic product from the highly reducing polyketide synthase srdA. SrdA synthesizes a reduced polyketide chain from one molecule of acetyl-CoA and five molecules of malonyl-CoA. The polyketide chain is then reductively released as an aldehyde. The oxidoreductases srdC, srdD and srdE then oxidize one of the hydroxy groups to facilitate the intramolecular aldol condensation, followed by dehydration to yield a salicylic aldehyde. This aldehyde can undergo facile reduction by endogenous reductases to yield the alcohol 1-hydroxy-2-hydroxymethyl-3-pent-1,3-dienylbenzene. The flavin-dependent srdI counteract against the propensity of the aldehydes to be reduced under physiological conditions and is responsible for reoxidizing 1-hydroxy-2-hydroxymethyl-3-pent-1,3-dienylbenzene back to the salicylic aldehyde. This salicylic aldehyde is then selectively epoxidized by the cupin-domain-containing oxidoreductase srdB to yield the epoxide, which can be hydrolyzed stereoselectively by the hydrolase srdG to give the final product sordarial. This Neurospora crassa (strain ATCC 24698 / 74-OR23-1A / CBS 708.71 / DSM 1257 / FGSC 987) protein is Short-chain dehydrogenase srdC.